The sequence spans 1086 residues: Lon protease homolog, mitochondrial (1086 aa).

The transit peptide at 1 to 55 directs the protein to the mitochondrion; it reads MLRTSCTSSLRRVVGKYVVSPLVASQIRFATSSVRSQPYLLNSELTELPAQFKRY. The disordered stretch occupies residues 61 to 176; it reads TEKPEGDVPE…EPNEIVTNAG (116 aa). Residues 69–83 show a composition bias toward low complexity; it reads PESGPEPSGESGISE. Positions 85-120 are enriched in basic and acidic residues; it reads SNVENDKHDGNDEIKPEAEKNEKDEIEKPEIDKDAI. Residues 124 to 163 show a composition bias toward low complexity; sequence DGVSESSVENVSGSSSAAGGASAPPSGNSNNNNNNNNNNN. The 224-residue stretch at 183-406 folds into the Lon N-terminal domain; that stretch reads LLAIPMKDRP…KALELLKVEL (224 aa). 558-565 contributes to the ATP binding site; it reads GPPGTGKT. Composition is skewed to basic and acidic residues over residues 767 to 782 and 815 to 827; these read EARE…EAKS and KVDE…SEEL. Disordered stretches follow at residues 767–788 and 800–835; these read EARE…ITGS and KAQS…EEEE. The Lon proteolytic domain occupies 871–1059; it reads IPPPGVATGL…QDVFDEIFPN (189 aa). Catalysis depends on residues S965 and K1008.

It belongs to the peptidase S16 family. Homohexamer or homoheptamer. Organized in a ring with a central cavity.

Its subcellular location is the mitochondrion matrix. It carries out the reaction Hydrolysis of proteins in presence of ATP.. In terms of biological role, ATP-dependent serine protease that mediates the selective degradation of misfolded, unassembled or oxidatively damaged polypeptides as well as certain short-lived regulatory proteins in the mitochondrial matrix. May also have a chaperone function in the assembly of inner membrane protein complexes. Participates in the regulation of mitochondrial gene expression and in the maintenance of the integrity of the mitochondrial genome. Binds to mitochondrial DNA in a site-specific manner. The protein is Lon protease homolog, mitochondrial of Scheffersomyces stipitis (strain ATCC 58785 / CBS 6054 / NBRC 10063 / NRRL Y-11545) (Yeast).